An 876-amino-acid polypeptide reads, in one-letter code: Alanine--tRNA ligase (876 aa).

N6-acetyllysine is present on lysine 74. The Zn(2+) site is built by histidine 564, histidine 568, cysteine 666, and histidine 670.

The protein belongs to the class-II aminoacyl-tRNA synthetase family. In terms of assembly, homotetramer. Requires Zn(2+) as cofactor.

It localises to the cytoplasm. The catalysed reaction is tRNA(Ala) + L-alanine + ATP = L-alanyl-tRNA(Ala) + AMP + diphosphate. In terms of biological role, catalyzes the attachment of alanine to tRNA(Ala) in a two-step reaction: alanine is first activated by ATP to form Ala-AMP and then transferred to the acceptor end of tRNA(Ala). Also edits incorrectly charged Ser-tRNA(Ala) and Gly-tRNA(Ala) via its editing domain. This Shigella dysenteriae serotype 1 (strain Sd197) protein is Alanine--tRNA ligase.